The following is a 449-amino-acid chain: Ribosomal protein uS12 methylthiotransferase RimO (449 aa).

The MTTase N-terminal domain maps to 5 to 116; sequence PTIAISHLGC…IVDVVQRVEN (112 aa). [4Fe-4S] cluster is bound by residues Cys14, Cys50, Cys79, Cys154, Cys158, and Cys161. Residues 140-369 form the Radical SAM core domain; sequence TTTEGVAYLR…MEVQQPISIK (230 aa). Residues 372-438 form the TRAM domain; the sequence is QNCIGQTVPV…VYDLYGKTNL (67 aa).

This sequence belongs to the methylthiotransferase family. RimO subfamily. It depends on [4Fe-4S] cluster as a cofactor.

The protein resides in the cytoplasm. It carries out the reaction L-aspartate(89)-[ribosomal protein uS12]-hydrogen + (sulfur carrier)-SH + AH2 + 2 S-adenosyl-L-methionine = 3-methylsulfanyl-L-aspartate(89)-[ribosomal protein uS12]-hydrogen + (sulfur carrier)-H + 5'-deoxyadenosine + L-methionine + A + S-adenosyl-L-homocysteine + 2 H(+). Functionally, catalyzes the methylthiolation of an aspartic acid residue of ribosomal protein uS12. The chain is Ribosomal protein uS12 methylthiotransferase RimO from Rippkaea orientalis (strain PCC 8801 / RF-1) (Cyanothece sp. (strain PCC 8801)).